Consider the following 102-residue polypeptide: MPAFSLNAYVALSAVLFALGGIGVLVRRSPLAILMCIELMLNAANLLFVAFGRAHGGYEGQIMAFLVITVAAAEVAIGLALTVLLFRRRAEVDVDRVNELKL.

A run of 3 helical transmembrane segments spans residues 6–26, 31–51, and 65–85; these read LNAY…GVLV, LAIL…FVAF, and FLVI…TVLL.

Belongs to the complex I subunit 4L family. In terms of assembly, NDH-1 is composed of 14 different subunits. Subunits NuoA, H, J, K, L, M, N constitute the membrane sector of the complex.

It localises to the cell membrane. The enzyme catalyses a quinone + NADH + 5 H(+)(in) = a quinol + NAD(+) + 4 H(+)(out). Functionally, NDH-1 shuttles electrons from NADH, via FMN and iron-sulfur (Fe-S) centers, to quinones in the respiratory chain. The immediate electron acceptor for the enzyme in this species is believed to be a menaquinone. Couples the redox reaction to proton translocation (for every two electrons transferred, four hydrogen ions are translocated across the cytoplasmic membrane), and thus conserves the redox energy in a proton gradient. This is NADH-quinone oxidoreductase subunit K 1 from Symbiobacterium thermophilum (strain DSM 24528 / JCM 14929 / IAM 14863 / T).